We begin with the raw amino-acid sequence, 178 residues long: MLRTFVTSALRSVCRQSPAASSLVPLVQRTQRATLMTLSRPCLLPTPSLASPAHHQLLQLPGVLAATGTPSNTRNVTKFSLVKGKRKTVKAVLKRFKRLDWGAWIRTHSGRQKKLFKKSAALRRRLKQHVFTNATQSWLLDKMVTSYWRRPKHFINDPYKPYHSRNEYYATQSKTFKV.

It belongs to the bacterial ribosomal protein bL35 family.

It is found in the mitochondrion. The chain is Large ribosomal subunit protein bL35m (mRpL35) from Drosophila melanogaster (Fruit fly).